We begin with the raw amino-acid sequence, 377 residues long: Lactosylceramide 1,3-N-acetyl-beta-D-glucosaminyltransferase (377 aa).

Topologically, residues 1-14 (MRVFVSSRRVKRWQ) are cytoplasmic. Residues 15-35 (FFHLFAICFILSFMVFWGPIN) traverse the membrane as a helical; Signal-anchor for type II membrane protein segment. The Lumenal segment spans residues 36–377 (NYIMSHMKSY…NSYPCRAAFA (342 aa)). N58 carries N-linked (GlcNAc...) asparagine glycosylation.

Belongs to the glycosyltransferase 31 family.

The protein localises to the golgi apparatus membrane. The enzyme catalyses a beta-D-Gal-(1-&gt;4)-beta-D-Glc-(1&lt;-&gt;1)-Cer(d18:1(4E)) + UDP-N-acetyl-alpha-D-glucosamine = a beta-D-GlcNAc-(1-&gt;3)-beta-D-Gal-(1-&gt;4)-beta-D-Glc-(1&lt;-&gt;1)-Cer(d18:1(4E)) + UDP + H(+). It carries out the reaction a neolactoside nLc4Cer(d18:1(4E)) + UDP-N-acetyl-alpha-D-glucosamine = a neolactoside IV(3)-beta-GlcNAc-nLc4Cer(d18:1(4E)) + UDP + H(+). It functions in the pathway protein modification; protein glycosylation. Its function is as follows. Beta-1,3-N-acetylglucosaminyltransferase that plays a key role in the synthesis of lacto- or neolacto-series carbohydrate chains on glycolipids, notably by participating in biosynthesis of HNK-1 and Lewis X carbohydrate structures. Has strong activity toward lactosylceramide (LacCer) and neolactotetraosylceramide (nLc(4)Cer; paragloboside), resulting in the synthesis of Lc(3)Cer and neolactopentaosylceramide (nLc(5)Cer), respectively. Probably plays a central role in regulating neolacto-series glycolipid synthesis during embryonic development. This is Lactosylceramide 1,3-N-acetyl-beta-D-glucosaminyltransferase from Rattus norvegicus (Rat).